The chain runs to 445 residues: Zinc finger protein SHOOT GRAVITROPISM 5 (445 aa).

Residues 22-31 (SSSDPFLSSS) are compositionally biased toward low complexity. A disordered region spans residues 22 to 59 (SSSDPFLSSSENGVTTTNTSTQKRKRRPAGTPDPDAEV). Over residues 32–42 (ENGVTTTNTST) the composition is skewed to polar residues. 3 C2H2-type zinc fingers span residues 73-95 (YICE…RRRH), 115-145 (YVCP…RRKH), and 151-178 (WVCE…TRGH). Positions 153, 156, 169, 173, 180, 182, 195, and 199 each coordinate Zn(2+). The CCHC-type 2; atypical zinc-finger motif lies at 178–201 (HSCDCGRVFSRVESFIEHQDNCSA). The SHR-binding stretch occupies residues 188 to 200 (RVESFIEHQDNCS). Disordered regions lie at residues 203–253 (RVHR…LEGR) and 281–314 (SSNQ…LNLS). Residues 214 to 248 (TAVTVPACSSRTASTVSTPSSETNYGGTVAVTTPQ) are compositionally biased toward polar residues. Residues 281-293 (SSNQNPNQENQQQ) show a composition bias toward low complexity. A coiled-coil region spans residues 340-397 (MKIAMKEKAYAEEAKREAKRQREIAENEFANAKKIRQKAQAELERAKFLKEQSMKKIS).

Mainly expressed in the endodermis, the gravity-sensing tissue in inflorescence stems. Mostly present in stems and flowers, and, to a lower extent, in seedlings, hypocotyls, roots and the shoot apical meristem (SAM).

The protein localises to the nucleus. Transcription factor involved in inflorescence stems gravitropism, probably by regulating starch accumulation in amyloplasts of graviperceptive cells. Required for stem circumnutation movements. Regulates lateral organ morphogenesis and gravitropic responses. Acts cooperatively with IDD16 to control silique and branche orientation. Involved in the establishment of auxin gradients through the regulation of auxin biosynthesis and transport. In Arabidopsis thaliana (Mouse-ear cress), this protein is Zinc finger protein SHOOT GRAVITROPISM 5.